The chain runs to 912 residues: Brevican core protein (912 aa).

Positions 1-22 are cleaved as a signal peptide; sequence MAPLFLPLLATLVLAWIPVALA. The Ig-like V-type domain maps to 36–155; that stretch reads RVRIAGDAPL…SSDAVEVKVK (120 aa). 5 disulfides stabilise this stretch: cysteine 57-cysteine 137, cysteine 179-cysteine 250, cysteine 203-cysteine 224, cysteine 277-cysteine 352, and cysteine 301-cysteine 322. A glycan (N-linked (GlcNAc...) asparagine) is linked at asparagine 130. 2 consecutive Link domains span residues 157 to 252 and 257 to 354; these read VVFL…YCYA and GELF…YCFR. Asparagine 337 carries an N-linked (GlcNAc...) asparagine glycan. Disordered regions lie at residues 408 to 427 and 438 to 651; these read IPII…PAEA and SIVP…SGDC. Serine 418 is subject to Phosphoserine. Serine 418 carries an O-linked (Xyl...) (chondroitin sulfate) serine glycan. Over residues 448-463 the composition is skewed to basic and acidic residues; it reads EEGKVLEQEEKYRGEE. Positions 464 to 478 are enriched in acidic residues; sequence EKEEEEEEEEVEDEA. Residues 520-537 are compositionally biased toward pro residues; the sequence is VSPPPYDEPEAPRPPRVL. Residues 603 to 617 show a composition bias toward basic and acidic residues; it reads GDTRDLETPSEENSR. One can recognise an EGF-like domain in the interval 647 to 683; it reads SSGDCVPSPCHNGGTCLEEEEGVRCLCLPGYGGDLCD. 8 disulfide bridges follow: cysteine 651-cysteine 662, cysteine 656-cysteine 671, cysteine 673-cysteine 682, cysteine 689-cysteine 700, cysteine 717-cysteine 809, cysteine 785-cysteine 801, cysteine 816-cysteine 859, and cysteine 845-cysteine 872. Residues 683–811 enclose the C-type lectin domain; that stretch reads DVGLHFCSPG…NYHLSYTCKM (129 aa). One can recognise a Sushi domain in the interval 814 to 874; the sequence is VSCGPPPELP…WGLPQISCVP (61 aa).

Belongs to the aggrecan/versican proteoglycan family. In terms of assembly, interacts with TNR. O-glycosylated; contains chondroitin sulfate. Brain; expressed in cerebellar astrocytes but not in neurons.

It localises to the secreted. Its subcellular location is the extracellular space. It is found in the extracellular matrix. Its function is as follows. May play a role in the terminally differentiating and the adult nervous system during postnatal development. Could stabilize interactions between hyaluronan (HA) and brain proteoglycans. This Bos taurus (Bovine) protein is Brevican core protein (BCAN).